The sequence spans 278 residues: Orotidine 5'-phosphate decarboxylase (278 aa).

Lys-95 acts as the Proton donor in catalysis.

Belongs to the OMP decarboxylase family. Type 2 subfamily.

It catalyses the reaction orotidine 5'-phosphate + H(+) = UMP + CO2. Its pathway is pyrimidine metabolism; UMP biosynthesis via de novo pathway; UMP from orotate: step 2/2. The polypeptide is Orotidine 5'-phosphate decarboxylase (Corynebacterium glutamicum (strain ATCC 13032 / DSM 20300 / JCM 1318 / BCRC 11384 / CCUG 27702 / LMG 3730 / NBRC 12168 / NCIMB 10025 / NRRL B-2784 / 534)).